Consider the following 305-residue polypeptide: Heme A synthase (305 aa).

Over 1–6 (MKKFLK) the chain is Cytoplasmic. Residues 7 to 27 (VWSVLTIICMTVVVFGGALVT) traverse the membrane as a helical segment. Residues 28 to 63 (KTGSADGCGNSWPLCNGQLVRLTDVTPEKLIEFMHR) are Extracellular-facing. Cysteine 35 and cysteine 42 are oxidised to a cystine. Glutamate 59 is a catalytic residue. Histidine 62 serves as a coordination point for heme o. Residues 64-84 (MTTGISSIFVIVLAICAWIYM) traverse the membrane as a helical segment. The Cytoplasmic segment spans residues 85 to 92 (KNRRETKP). Residues 93-113 (LAIIAVLFLIIQALMGMAAVV) traverse the membrane as a helical segment. The Extracellular portion of the chain corresponds to 114-122 (WGQNPYIMA). A helical membrane pass occupies residues 123-143 (LHFGISIICYASIVLLALMIF). Histidine 124 provides a ligand contact to heme o. Residues 144 to 160 (EVDRKFDARNLVMGTKL) lie on the Cytoplasmic side of the membrane. Residues 161-181 (RVNIYALTIYTYLAVYTGALV) form a helical membrane-spanning segment. Topologically, residues 182-212 (RHEKASMAVPVWPFENGHFIMPTSVQDYVQY) are extracellular. Residues 213 to 233 (FHRLAAFILIVWLLYVTWLVF) traverse the membrane as a helical segment. Histidine 214 serves as a coordination point for heme b. At 234-240 (RDYRRYR) the chain is on the cytoplasmic side. The helical transmembrane segment at 241–261 (VLTFSMVLSLVFIALQAVTGA) threads the bilayer. Over 262 to 271 (LSVYTGVNLY) the chain is Extracellular. A helical membrane pass occupies residues 272 to 292 (IALAHSLIITMLFALLCYLCL). Histidine 276 contacts heme b. Topologically, residues 293 to 305 (LASRSKSNRLRIK) are cytoplasmic.

The protein belongs to the COX15/CtaA family. Type 1 subfamily. As to quaternary structure, interacts with CtaB. Requires heme b as cofactor.

It localises to the cell membrane. It catalyses the reaction Fe(II)-heme o + 2 A + H2O = Fe(II)-heme a + 2 AH2. Its pathway is porphyrin-containing compound metabolism; heme A biosynthesis; heme A from heme O: step 1/1. Functionally, catalyzes the conversion of heme O to heme A by two successive hydroxylations of the methyl group at C8. The first hydroxylation forms heme I, the second hydroxylation results in an unstable dihydroxymethyl group, which spontaneously dehydrates, resulting in the formyl group of heme A. The chain is Heme A synthase from Listeria monocytogenes serovar 1/2a (strain ATCC BAA-679 / EGD-e).